Consider the following 278-residue polypeptide: Urease accessory protein UreD (278 aa).

Belongs to the UreD family. In terms of assembly, ureD, UreF and UreG form a complex that acts as a GTP-hydrolysis-dependent molecular chaperone, activating the urease apoprotein by helping to assemble the nickel containing metallocenter of UreC. The UreE protein probably delivers the nickel.

It localises to the cytoplasm. Required for maturation of urease via the functional incorporation of the urease nickel metallocenter. This chain is Urease accessory protein UreD, found in Blochmanniella pennsylvanica (strain BPEN).